The primary structure comprises 533 residues: MSILALVEDRPTPREVYNWRVYLLAAVASFTSCMIGYDSAFIGTTLSLQSFQNEFNWESLNTDLISANIVSLYQAGAFFGALFAYPIGHFWGRRWGLMFSALIFFLGAGMMLGANGDRGLGLIYGGRVLAGIGVGAGSNICPIYISEMAPPAIRGRLVGVYELGWQIGGVVGFWINYGVDETLAPSHKQWIIPFAVQLIPAGLLIIGALLIRESPRWLFLRGNREKGIETLAWIRNLPADHIYMVEEINMIEQSLEQQRVKIGLGFWKPFKAAWTNKRILYRLFLGSMLFLWQNGSGINAINYYSPRVFKSIGVSGGNTSLLTTGIFGVVKAVITFVWLLYLIDHFGRRNLLLVGAAGGSVCLWIVGGYIKIAKPENNPEGTQLDSGGIAAIFFFYLWTAFYTPSWNGTPWVINSEMFDPTVRSLAQACAAASNWLWNFLISRFTPQMFTSMGYGVYFFFASLMILSIVFVFFLIPETKGVPLESMETLFDKKPVWHAHSQLIRELRENEEAFRADMGASGKGGVTKEYVEEA.

The Cytoplasmic segment spans residues 1–21 (MSILALVEDRPTPREVYNWRV). Residues 22–42 (YLLAAVASFTSCMIGYDSAFI) traverse the membrane as a helical segment. Over 43–67 (GTTLSLQSFQNEFNWESLNTDLISA) the chain is Extracellular. The helical transmembrane segment at 68–88 (NIVSLYQAGAFFGALFAYPIG) threads the bilayer. At 89–94 (HFWGRR) the chain is on the cytoplasmic side. Residues 95–115 (WGLMFSALIFFLGAGMMLGAN) form a helical membrane-spanning segment. At 116–127 (GDRGLGLIYGGR) the chain is on the extracellular side. The chain crosses the membrane as a helical span at residues 128-148 (VLAGIGVGAGSNICPIYISEM). Topologically, residues 149 to 156 (APPAIRGR) are cytoplasmic. A helical transmembrane segment spans residues 157–177 (LVGVYELGWQIGGVVGFWINY). Over 178 to 191 (GVDETLAPSHKQWI) the chain is Extracellular. Residues 192 to 212 (IPFAVQLIPAGLLIIGALLIR) traverse the membrane as a helical segment. Topologically, residues 213 to 282 (ESPRWLFLRG…AWTNKRILYR (70 aa)) are cytoplasmic. The chain crosses the membrane as a helical span at residues 283 to 303 (LFLGSMLFLWQNGSGINAINY). At 304–324 (YSPRVFKSIGVSGGNTSLLTT) the chain is on the extracellular side. Residues 325–346 (GIFGVVKAVITFVWLLYLIDHF) form a helical membrane-spanning segment. Residues 347-349 (GRR) lie on the Cytoplasmic side of the membrane. A helical membrane pass occupies residues 350 to 370 (NLLLVGAAGGSVCLWIVGGYI). Residues 371-385 (KIAKPENNPEGTQLD) are Extracellular-facing. Residues 386–406 (SGGIAAIFFFYLWTAFYTPSW) form a helical membrane-spanning segment. At 407-431 (NGTPWVINSEMFDPTVRSLAQACAA) the chain is on the cytoplasmic side. Residues 432-452 (ASNWLWNFLISRFTPQMFTSM) form a helical membrane-spanning segment. Over 453–454 (GY) the chain is Extracellular. Residues 455-475 (GVYFFFASLMILSIVFVFFLI) form a helical membrane-spanning segment. The Cytoplasmic segment spans residues 476–533 (PETKGVPLESMETLFDKKPVWHAHSQLIRELRENEEAFRADMGASGKGGVTKEYVEEA).

Belongs to the major facilitator superfamily. Sugar transporter (TC 2.A.1.1) family. Interacts with creB. Ubiquitinated. Deubiquitinated by creB, probably to control its activity or amount.

Its subcellular location is the cell membrane. In terms of biological role, integral membrane transporter that imports quinic acid to be catabolized as a carbon source. The sequence is that of Quinate permease (qutD) from Emericella nidulans (strain FGSC A4 / ATCC 38163 / CBS 112.46 / NRRL 194 / M139) (Aspergillus nidulans).